A 142-amino-acid polypeptide reads, in one-letter code: ATP synthase epsilon chain (142 aa).

The protein belongs to the ATPase epsilon chain family. F-type ATPases have 2 components, CF(1) - the catalytic core - and CF(0) - the membrane proton channel. CF(1) has five subunits: alpha(3), beta(3), gamma(1), delta(1), epsilon(1). CF(0) has three main subunits: a, b and c.

It is found in the cell inner membrane. Functionally, produces ATP from ADP in the presence of a proton gradient across the membrane. This is ATP synthase epsilon chain from Actinobacillus succinogenes (strain ATCC 55618 / DSM 22257 / CCUG 43843 / 130Z).